A 239-amino-acid polypeptide reads, in one-letter code: Uridylate kinase (239 aa).

Residue 10–13 (KFSG) participates in ATP binding. The interval 18-23 (GENGFG) is involved in allosteric activation by GTP. G52 is a UMP binding site. G53 and R57 together coordinate ATP. Residues D73 and 134–141 (TGNPYFTT) each bind UMP. ATP is bound by residues T161, Y167, and D170.

Belongs to the UMP kinase family. Homohexamer.

The protein resides in the cytoplasm. The enzyme catalyses UMP + ATP = UDP + ADP. Its pathway is pyrimidine metabolism; CTP biosynthesis via de novo pathway; UDP from UMP (UMPK route): step 1/1. Allosterically activated by GTP. Inhibited by UTP. In terms of biological role, catalyzes the reversible phosphorylation of UMP to UDP. The sequence is that of Uridylate kinase from Campylobacter jejuni subsp. jejuni serotype O:2 (strain ATCC 700819 / NCTC 11168).